A 328-amino-acid polypeptide reads, in one-letter code: Endo-beta-1,4-glucanase B (328 aa).

The first 17 residues, Met1–Ala17, serve as a signal peptide directing secretion. A glycan (N-linked (GlcNAc...) asparagine) is linked at Asn95. Catalysis depends on Glu155, which acts as the Proton donor. Glu262 serves as the catalytic Nucleophile.

The protein belongs to the glycosyl hydrolase 5 (cellulase A) family.

The protein resides in the secreted. The catalysed reaction is Endohydrolysis of (1-&gt;4)-beta-D-glucosidic linkages in cellulose, lichenin and cereal beta-D-glucans.. Its function is as follows. Has endoglucanase activity on substrates containing beta-1,4 glycosidic bonds, like in carboxymethylcellulose (CMC), hydroxyethylcellulose (HEC) and beta-glucan. Involved in the degradation of complex natural cellulosic substrates. This is Endo-beta-1,4-glucanase B (eglB) from Emericella nidulans (strain FGSC A4 / ATCC 38163 / CBS 112.46 / NRRL 194 / M139) (Aspergillus nidulans).